Consider the following 59-residue polypeptide: Large ribosomal subunit protein eL29 (59 aa).

Basic residues predominate over residues 1-26 (MAKSKNHTAHNQTRKAHRNGIKKPKT). Residues 1–37 (MAKSKNHTAHNQTRKAHRNGIKKPKTYKYPSLKGVDP) are disordered. Residue lysine 52 forms a Glycyl lysine isopeptide (Lys-Gly) (interchain with G-Cter in ubiquitin) linkage.

Belongs to the eukaryotic ribosomal protein eL29 family. In terms of assembly, component of the large ribosomal subunit (LSU). Mature yeast ribosomes consist of a small (40S) and a large (60S) subunit. The 40S small subunit contains 1 molecule of ribosomal RNA (18S rRNA) and 33 different proteins (encoded by 57 genes). The large 60S subunit contains 3 rRNA molecules (25S, 5.8S and 5S rRNA) and 46 different proteins (encoded by 81 genes).

It is found in the cytoplasm. Its function is as follows. Component of the ribosome, a large ribonucleoprotein complex responsible for the synthesis of proteins in the cell. The small ribosomal subunit (SSU) binds messenger RNAs (mRNAs) and translates the encoded message by selecting cognate aminoacyl-transfer RNA (tRNA) molecules. The large subunit (LSU) contains the ribosomal catalytic site termed the peptidyl transferase center (PTC), which catalyzes the formation of peptide bonds, thereby polymerizing the amino acids delivered by tRNAs into a polypeptide chain. The nascent polypeptides leave the ribosome through a tunnel in the LSU and interact with protein factors that function in enzymatic processing, targeting, and the membrane insertion of nascent chains at the exit of the ribosomal tunnel. This Saccharomyces cerevisiae (strain ATCC 204508 / S288c) (Baker's yeast) protein is Large ribosomal subunit protein eL29.